The sequence spans 909 residues: Golgin subfamily A member 6-like protein 2 (909 aa).

The span at 1-11 (MWPQPHLPPHP) shows a compositional bias: pro residues. 5 disordered regions span residues 1–88 (MWPQ…ASHQ), 300–362 (ERLR…EQEE), 381–408 (QEKQ…RLRE), 425–494 (KMRE…QRLP), and 524–909 (EEMW…QSSL). The segment covering 13-31 (MSEKTRQNKLAEAKKKFTD) has biased composition (basic and acidic residues). The span at 53–77 (NNGTNPETTTSEGCHSPEDTQQNRA) shows a compositional bias: polar residues. Over residues 78-88 (QLKEEKKASHQ) the composition is skewed to basic and acidic residues. Positions 192–526 (HKKADRYIEE…EEKIRDQEEM (335 aa)) form a coiled coil. 2 stretches are compositionally biased toward basic and acidic residues: residues 425 to 478 (KMRE…KQEE) and 524 to 542 (EEMW…MREQ). The segment covering 607-620 (AGGEEDAGAGEEDM) has biased composition (acidic residues). Gly residues-rich tracts occupy residues 641–654 (GGGG…GEDA) and 676–689 (GAGG…GEDV). Basic residues predominate over residues 692-719 (GRRRCGSSRGCRNRRRSCGNTRRCRSRR). Residues 746–755 (AGAEDVAAGG) are compositionally biased toward low complexity. Positions 757-766 (DAGEEEDAGG) are enriched in acidic residues. The span at 791–871 (GAGGEDVGAG…AGGEDVGAGG (81 aa)) shows a compositional bias: gly residues. The segment covering 872–892 (DAREGGEDTRSEREDAGEAAR) has biased composition (basic and acidic residues).

This sequence belongs to the GOLGA6 family.

The protein is Golgin subfamily A member 6-like protein 2 (GOLGA6L2) of Homo sapiens (Human).